Here is a 590-residue protein sequence, read N- to C-terminus: Beta-glucosidase 29 (590 aa).

Positions 1–21 (MNVQIFILLLIISWLTPKITS) are cleaved as a signal peptide. Residues Gln-48, His-151, and 196–197 (NE) each bind a beta-D-glucoside. Glu-197 (proton donor) is an active-site residue. Cys-216 and Cys-224 are disulfide-bonded. 2 N-linked (GlcNAc...) asparagine glycosylation sites follow: Asn-255 and Asn-331. Residue Tyr-341 coordinates a beta-D-glucoside. N-linked (GlcNAc...) asparagine glycosylation is present at Asn-371. A beta-D-glucoside contacts are provided by residues Glu-413, Trp-463, 470-471 (EW), and Phe-479. The Nucleophile role is filled by Glu-413. Residues Asn-522 and Asn-553 are each glycosylated (N-linked (GlcNAc...) asparagine).

The protein belongs to the glycosyl hydrolase 1 family.

It catalyses the reaction Hydrolysis of terminal, non-reducing beta-D-glucosyl residues with release of beta-D-glucose.. This chain is Beta-glucosidase 29, found in Arabidopsis thaliana (Mouse-ear cress).